A 460-amino-acid polypeptide reads, in one-letter code: Elongation factor 1-alpha (460 aa).

Gly-2 carries the post-translational modification N,N,N-trimethylglycine. Lys-3 is modified (N6,N6-dimethyllysine; alternate). An N6-methyllysine; alternate modification is found at Lys-3. Positions 6–241 (KQHINIVVIG…DAIEPPVRPT (236 aa)) constitute a tr-type G domain. The segment at 15 to 22 (GHVDSGKS) is G1. GTP is bound at residue 15–22 (GHVDSGKS). At Lys-31 the chain carries N6-methyllysine. Positions 71–75 (GITID) are G2. An N6,N6,N6-trimethyllysine modification is found at Lys-80. Residues 92–95 (DAPG) are G3. GTP-binding positions include 92-96 (DAPGH) and 154-157 (NKMD). Positions 154 to 157 (NKMD) are G4. The G5 stretch occupies residues 193 to 195 (SGF). N6,N6-dimethyllysine; alternate is present on Lys-317. Residue Lys-317 is modified to N6-methyllysine; alternate. The residue at position 391 (Lys-391) is an N6-methyllysine.

Belongs to the TRAFAC class translation factor GTPase superfamily. Classic translation factor GTPase family. EF-Tu/EF-1A subfamily.

The protein localises to the cytoplasm. Functionally, this protein promotes the GTP-dependent binding of aminoacyl-tRNA to the A-site of ribosomes during protein biosynthesis. This chain is Elongation factor 1-alpha (tef1), found in Aspergillus oryzae (strain ATCC 42149 / RIB 40) (Yellow koji mold).